The chain runs to 483 residues: NADH-quinone oxidoreductase subunit N (483 aa).

Helical transmembrane passes span 13–33 (ALPE…DAAV), 39–57 (YLAY…FLTV), 76–96 (PLSD…LVYS), 110–130 (FFVL…ASHF), 131–151 (LTLY…VALQ), 165–185 (FVLG…VYGV), 206–226 (IPLV…LGAV), 240–260 (PTAM…AFVV), 277–297 (MLVI…IAQS), 302–322 (MFAY…LAGS), 330–350 (MFYV…ILLL), 373–393 (LAFV…TVGF), 406–426 (IGYV…AFYY), and 459–479 (LAVL…VQAI).

This sequence belongs to the complex I subunit 2 family. NDH-1 is composed of 14 different subunits. Subunits NuoA, H, J, K, L, M, N constitute the membrane sector of the complex.

The protein resides in the cell inner membrane. It catalyses the reaction a quinone + NADH + 5 H(+)(in) = a quinol + NAD(+) + 4 H(+)(out). Its function is as follows. NDH-1 shuttles electrons from NADH, via FMN and iron-sulfur (Fe-S) centers, to quinones in the respiratory chain. The immediate electron acceptor for the enzyme in this species is believed to be ubiquinone. Couples the redox reaction to proton translocation (for every two electrons transferred, four hydrogen ions are translocated across the cytoplasmic membrane), and thus conserves the redox energy in a proton gradient. The chain is NADH-quinone oxidoreductase subunit N from Thiobacillus denitrificans (strain ATCC 25259 / T1).